The sequence spans 410 residues: MTYPDPTLFGHDPWWLILAKSLGVFVFLLLTVLAAILIERKILGRMQLRLGPNRVGPRGLLQSLADGIKLALKEGLVPAGVDKWIYLAAPVISVIPAFMAFAVIPLGPEVSVFGHRTALQLTDLPVAVLYILAVTSIGVYGIVLAGWASGSVYPLLGGLRSSAQVISYEIAMALSFVAVFIYAGTMSTSGIVAAQNDVWFIFLLLPSFLVYLTSMVGETNRAPFDLPEAEGELVGGFHTEYSSLKFAMFMLAEYVNMTTVSALATTLFLGGWHAPWPISIADGANSDWWPLLWFTAKVWLFLFFFMWLRATLPRMRYDQFMRLGWKLLIPVSLAWIAIVATTRAMQNQGYQGWVTALIGVAGVAAILASLLAWRALRARRRRTSHSPPAQSSDHGAFPVPPLPVKEPADA.

Helical transmembrane passes span 16 to 36, 84 to 104, 124 to 144, 165 to 185, 198 to 218, 260 to 280, 288 to 308, 320 to 340, and 353 to 373; these read LILA…LAAI, WIYL…FAVI, LPVA…GIVL, VISY…YAGT, VWFI…MVGE, VSAL…PISI, WWPL…FMWL, FMRL…AIVA, and WVTA…LLAW. Positions 384 to 410 are disordered; sequence SHSPPAQSSDHGAFPVPPLPVKEPADA.

Belongs to the complex I subunit 1 family. As to quaternary structure, NDH-1 is composed of 14 different subunits. Subunits NuoA, H, J, K, L, M, N constitute the membrane sector of the complex.

It is found in the cell membrane. It catalyses the reaction a quinone + NADH + 5 H(+)(in) = a quinol + NAD(+) + 4 H(+)(out). NDH-1 shuttles electrons from NADH, via FMN and iron-sulfur (Fe-S) centers, to quinones in the respiratory chain. The immediate electron acceptor for the enzyme in this species is believed to be menaquinone. Couples the redox reaction to proton translocation (for every two electrons transferred, four hydrogen ions are translocated across the cytoplasmic membrane), and thus conserves the redox energy in a proton gradient. In Mycolicibacterium gilvum (strain PYR-GCK) (Mycobacterium gilvum (strain PYR-GCK)), this protein is NADH-quinone oxidoreductase subunit H.